The following is a 969-amino-acid chain: Protein translocase subunit SecA (969 aa).

ATP is bound by residues glutamine 99, 117 to 121 (GEGKT), and aspartate 631.

It belongs to the SecA family. Monomer and homodimer. Part of the essential Sec protein translocation apparatus which comprises SecA, SecYEG and auxiliary proteins SecDF. Other proteins may also be involved.

The protein localises to the cell inner membrane. Its subcellular location is the cytoplasm. The enzyme catalyses ATP + H2O + cellular proteinSide 1 = ADP + phosphate + cellular proteinSide 2.. Functionally, part of the Sec protein translocase complex. Interacts with the SecYEG preprotein conducting channel. Has a central role in coupling the hydrolysis of ATP to the transfer of proteins into and across the cell membrane, serving as an ATP-driven molecular motor driving the stepwise translocation of polypeptide chains across the membrane. The protein is Protein translocase subunit SecA of Chlamydia trachomatis serovar L2 (strain ATCC VR-902B / DSM 19102 / 434/Bu).